A 1065-amino-acid polypeptide reads, in one-letter code: Pumilio domain-containing protein P35G2.14 (1065 aa).

Disordered regions lie at residues 1–78, 130–265, and 422–573; these read MHQD…SLRS, ITSK…PWSP, and TTGF…NTNS. Over residues 16–44 the composition is skewed to polar residues; the sequence is RNTISKPSNNNPPLDMSSLNNDFGQQLDS. The span at 59–77 shows a compositional bias: low complexity; that stretch reads NPSSNFNDSNRSNISSSLR. Composition is skewed to polar residues over residues 134 to 151 and 169 to 189; these read LQNN…RGRT and SSVS…HFNP. Low complexity-rich tracts occupy residues 190 to 224 and 236 to 246; these read SSSS…SEII and SASNAANSGSN. 2 stretches are compositionally biased toward polar residues: residues 247-262 and 434-455; these read TIRA…NTLP and GLNT…TFEV. T260 is subject to Phosphothreonine. The span at 470-483 shows a compositional bias: low complexity; it reads PLGSLSSRPKPSSS. Polar residues-rich tracts occupy residues 495 to 522 and 529 to 551; these read LKTS…SSSP and IHNQ…NGLR. 3 positions are modified to phosphoserine: S506, S511, and S515. T554 carries the phosphothreonine modification. Residues 559–573 are compositionally biased toward low complexity; sequence NISTRSSSESNNTNS. The RRM domain maps to 592 to 666; the sequence is HALWVGNLPS…DPVCISFAKV (75 aa). Positions 712-1065 constitute a PUM-HD domain; it reads DLSKIYQILN…ELKKLAEVCA (354 aa). Pumilio repeat units follow at residues 771–808, 809–844, 846–884, 886–917, 919–954, and 956–993; these read AINW…MMLE, RIAP…RLIA, HLQP…AILN, FWVI…VLVA, AITV…ILLT, and RFVQ…LVVD.

It localises to the cytoplasm. The chain is Pumilio domain-containing protein P35G2.14 from Schizosaccharomyces pombe (strain 972 / ATCC 24843) (Fission yeast).